A 380-amino-acid polypeptide reads, in one-letter code: Tryptophan 2,3-dioxygenase (380 aa).

Residues 57–61 and Arg-128 contribute to the substrate site; that span reads FIITH. His-313 is a heme binding site. Thr-328 is a binding site for substrate.

Belongs to the tryptophan 2,3-dioxygenase family. As to quaternary structure, homotetramer. Dimer of dimers. It depends on heme as a cofactor.

The catalysed reaction is L-tryptophan + O2 = N-formyl-L-kynurenine. It participates in amino-acid degradation; L-tryptophan degradation via kynurenine pathway; L-kynurenine from L-tryptophan: step 1/2. Its pathway is pigment biosynthesis; ommochrome biosynthesis. Its function is as follows. Heme-dependent dioxygenase that catalyzes the oxidative cleavage of the L-tryptophan (L-Trp) pyrrole ring and converts L-tryptophan to N-formyl-L-kynurenine. Catalyzes the oxidative cleavage of the indole moiety. The polypeptide is Tryptophan 2,3-dioxygenase (Drosophila mojavensis (Fruit fly)).